Consider the following 272-residue polypeptide: Small ribosomal subunit protein uS2 (272 aa).

Positions Leu251–Glu272 are disordered. A compositionally biased stretch (low complexity) spans Thr253–Glu264.

It belongs to the universal ribosomal protein uS2 family.

This is Small ribosomal subunit protein uS2 from Bifidobacterium adolescentis (strain ATCC 15703 / DSM 20083 / NCTC 11814 / E194a).